Consider the following 329-residue polypeptide: Telomeric repeat-binding factor 2-interacting protein 1 (329 aa).

In terms of domain architecture, BRCT spans 63 to 86 (AVSTDYVVACVESQRRLPLDLYRH). Residues 94–153 (ASPRGRLPFTEAEDAALLRAVRERSGAPRVSGTALWKELECTGLTRHSWQAMRDRYLRHL) form the Myb-like domain. Positions 179–206 (EFESSESGSDTSDTPDELPLQNGEGTFP) are disordered. The Nuclear localization signal motif lies at 313-329 (AKFGAENVARRVAFRKS).

The protein belongs to the RAP1 family. As to quaternary structure, homodimer. Component of the shelterin complex (telosome). Interacts with terf2; the interaction is direct.

It is found in the nucleus. The protein resides in the chromosome. It localises to the telomere. In terms of biological role, acts both as a regulator of telomere function and as a transcription regulator. Involved in the regulation of telomere length and protection as a component of the shelterin complex (telosome). Does not bind DNA directly: recruited to telomeric double-stranded 5'-TTAGGG-3' repeats via its interaction with terf2. Independently of its function in telomeres, also acts as a transcription regulator: recruited to extratelomeric 5'-TTAGGG-3' sites via its association with terf2 or other factors, and regulates gene expression. This is Telomeric repeat-binding factor 2-interacting protein 1 (TERF2IP) from Gallus gallus (Chicken).